Reading from the N-terminus, the 138-residue chain is ATP synthase epsilon chain (138 aa).

It belongs to the ATPase epsilon chain family. As to quaternary structure, F-type ATPases have 2 components, CF(1) - the catalytic core - and CF(0) - the membrane proton channel. CF(1) has five subunits: alpha(3), beta(3), gamma(1), delta(1), epsilon(1). CF(0) has three main subunits: a, b and c.

Its subcellular location is the cell inner membrane. Functionally, produces ATP from ADP in the presence of a proton gradient across the membrane. This chain is ATP synthase epsilon chain, found in Cupriavidus pinatubonensis (strain JMP 134 / LMG 1197) (Cupriavidus necator (strain JMP 134)).